The sequence spans 40 residues: Photosystem II reaction center protein Y (40 aa).

Residues 5-23 (LIVVLAPILLAGGWAVFNI) traverse the membrane as a helical segment.

It belongs to the PsbY family. In terms of assembly, PSII is composed of 1 copy each of membrane proteins PsbA, PsbB, PsbC, PsbD, PsbE, PsbF, PsbH, PsbI, PsbJ, PsbK, PsbL, PsbM, PsbT, PsbX, PsbY, PsbZ, Psb30/Ycf12, peripheral proteins PsbO, CyanoQ (PsbQ), PsbU, PsbV and a large number of cofactors. It forms dimeric complexes.

It localises to the cellular thylakoid membrane. Its function is as follows. Loosely associated component of the core of photosystem II (PSII), it is not always seen in crystals. PSII is a light-driven water plastoquinone oxidoreductase, using light energy to abstract electrons from H(2)O, generating a proton gradient subsequently used for ATP formation. This is Photosystem II reaction center protein Y from Synechococcus elongatus (strain ATCC 33912 / PCC 7942 / FACHB-805) (Anacystis nidulans R2).